Consider the following 241-residue polypeptide: LexA repressor (241 aa).

The segment at residues 41–61 (FREIGNAAGLKSPSSVKHQLQ) is a DNA-binding region (H-T-H motif). Active-site for autocatalytic cleavage activity residues include Ser-165 and Lys-202.

The protein belongs to the peptidase S24 family. In terms of assembly, homodimer.

The enzyme catalyses Hydrolysis of Ala-|-Gly bond in repressor LexA.. In terms of biological role, represses a number of genes involved in the response to DNA damage (SOS response), including recA and lexA. In the presence of single-stranded DNA, RecA interacts with LexA causing an autocatalytic cleavage which disrupts the DNA-binding part of LexA, leading to derepression of the SOS regulon and eventually DNA repair. In Bifidobacterium longum (strain DJO10A), this protein is LexA repressor.